Consider the following 435-residue polypeptide: Secreted RxLR effector protein 35 (435 aa).

The first 22 residues, 1–22 (MRGAYYIIIALCVVASSQVAAG), serve as a signal peptide directing secretion. The RxLR-dEER motif lies at 48–65 (RFLRGSRVVHDDLANEER). A disordered region spans residues 336–357 (RPKRTTDGNTGTISLPTKPTKT). Residues 342–354 (DGNTGTISLPTKP) show a composition bias toward polar residues.

This sequence belongs to the RxLR effector family.

Its subcellular location is the secreted. It is found in the host nucleus. In terms of biological role, secreted effector that acts as an elicitor that induces cell death in host plant cells. The protein is Secreted RxLR effector protein 35 of Plasmopara viticola (Downy mildew of grapevine).